A 267-amino-acid chain; its full sequence is Glutamate racemase (267 aa).

Substrate is bound by residues 9-10 (DS) and 41-42 (YS). C73 serves as the catalytic Proton donor/acceptor. 74–75 (NT) serves as a coordination point for substrate. The Proton donor/acceptor role is filled by C184. Position 185–186 (185–186 (TH)) interacts with substrate.

This sequence belongs to the aspartate/glutamate racemases family.

It carries out the reaction L-glutamate = D-glutamate. Its pathway is cell wall biogenesis; peptidoglycan biosynthesis. In terms of biological role, provides the (R)-glutamate required for cell wall biosynthesis. This is Glutamate racemase from Actinobacillus pleuropneumoniae serotype 7 (strain AP76).